Reading from the N-terminus, the 420-residue chain is Gamma-glutamyl phosphate reductase (420 aa).

The protein belongs to the gamma-glutamyl phosphate reductase family.

The protein localises to the cytoplasm. It catalyses the reaction L-glutamate 5-semialdehyde + phosphate + NADP(+) = L-glutamyl 5-phosphate + NADPH + H(+). The protein operates within amino-acid biosynthesis; L-proline biosynthesis; L-glutamate 5-semialdehyde from L-glutamate: step 2/2. Its function is as follows. Catalyzes the NADPH-dependent reduction of L-glutamate 5-phosphate into L-glutamate 5-semialdehyde and phosphate. The product spontaneously undergoes cyclization to form 1-pyrroline-5-carboxylate. This chain is Gamma-glutamyl phosphate reductase, found in Chlorobaculum parvum (strain DSM 263 / NCIMB 8327) (Chlorobium vibrioforme subsp. thiosulfatophilum).